The sequence spans 80 residues: RNA-binding protein Hfq (80 aa).

Residues 10 to 70 (DIFLNQVRKE…ISTISPMKSV (61 aa)) enclose the Sm domain.

Belongs to the Hfq family. As to quaternary structure, homohexamer.

Functionally, RNA chaperone that binds small regulatory RNA (sRNAs) and mRNAs to facilitate mRNA translational regulation in response to envelope stress, environmental stress and changes in metabolite concentrations. Also binds with high specificity to tRNAs. This chain is RNA-binding protein Hfq, found in Ruminiclostridium cellulolyticum (strain ATCC 35319 / DSM 5812 / JCM 6584 / H10) (Clostridium cellulolyticum).